A 344-amino-acid chain; its full sequence is MSASQGSKNTNAEPWGGFDDNIIQGTGSAVIDMENMDDTSGSSFEDVGEMHQRMREEEEVTAEAAATEEDNGEYGEFLGMKGLKGQLGRQVADEVWQAGKRQASKAFNLYANIDILRPYFDVEPIQVRNRLVESLIPVRMINFPQKVAGELYGPMMLVFTLVAILLHGMKTSGTVIREGTLMGTAIGTGFGYWLGVSSFIYFLAYLCNAQITMLQMLSLLGYGLFGHCVVLFITYNVHFHSLFYLLWMVIGGLSTLRMVAVLISRTVGQTPRLILCGSLAALHMLFLLYLHFAYHKMVEGILDTLEGPNIPPIQRVARDVPVVASAVVNATVKSIAAIVQSQQL.

The segment covering 1–12 (MSASQGSKNTNA) has biased composition (polar residues). The interval 1 to 24 (MSASQGSKNTNAEPWGGFDDNIIQ) is disordered. Over 1 to 146 (MSASQGSKNT…PVRMINFPQK (146 aa)) the chain is Cytoplasmic. Residues 147–167 (VAGELYGPMMLVFTLVAILLH) traverse the membrane as a helical segment. Over 168–185 (GMKTSGTVIREGTLMGTA) the chain is Lumenal. Residues 186–206 (IGTGFGYWLGVSSFIYFLAYL) form a helical membrane-spanning segment. The Cytoplasmic portion of the chain corresponds to 207–212 (CNAQIT). A helical transmembrane segment spans residues 213 to 233 (MLQMLSLLGYGLFGHCVVLFI). Residues 234–242 (TYNVHFHSL) lie on the Lumenal side of the membrane. The helical transmembrane segment at 243–263 (FYLLWMVIGGLSTLRMVAVLI) threads the bilayer. The Cytoplasmic segment spans residues 264–272 (SRTVGQTPR). The chain crosses the membrane as a helical span at residues 273 to 293 (LILCGSLAALHMLFLLYLHFA). Topologically, residues 294–344 (YHKMVEGILDTLEGPNIPPIQRVARDVPVVASAVVNATVKSIAAIVQSQQL) are lumenal. N-linked (GlcNAc...) asparagine glycosylation occurs at Asn329.

This sequence belongs to the YIP1 family.

It localises to the cell membrane. The protein localises to the golgi apparatus. Its subcellular location is the cis-Golgi network membrane. It is found in the cytoplasm. Functionally, involved in the maintenance of the Golgi structure. May play a role in hematopoiesis. The chain is Protein YIPF3 (yipf3) from Danio rerio (Zebrafish).